A 391-amino-acid chain; its full sequence is Processive diacylglycerol beta-glucosyltransferase (391 aa).

It belongs to the glycosyltransferase 28 family. UgtP subfamily.

The protein resides in the cell membrane. The catalysed reaction is a 1,2-diacyl-3-O-(beta-D-glucopyranosyl)-sn-glycerol + UDP-alpha-D-glucose = a 1,2-diacyl-3-O-(beta-D-Glc-(1-&gt;6)-beta-D-Glc)-sn-glycerol + UDP + H(+). It carries out the reaction a 1,2-diacyl-sn-glycerol + UDP-alpha-D-glucose = a 1,2-diacyl-3-O-(beta-D-glucopyranosyl)-sn-glycerol + UDP + H(+). It functions in the pathway glycolipid metabolism; diglucosyl-diacylglycerol biosynthesis. Processive glucosyltransferase involved in the biosynthesis of both the bilayer- and non-bilayer-forming membrane glucolipids. Is able to successively transfer two glucosyl residues to diacylglycerol (DAG), thereby catalyzing the formation of beta-monoglucosyl-DAG (3-O-(beta-D-glucopyranosyl)-1,2-diacyl-sn-glycerol) and beta-diglucosyl-DAG (3-O-(beta-D-glucopyranosyl-beta-(1-&gt;6)-D-glucopyranosyl)-1,2-diacyl-sn-glycerol). Beta-diglucosyl-DAG is the predominant glycolipid found in Bacillales and is also used as a membrane anchor for lipoteichoic acid (LTA). In Staphylococcus epidermidis (strain ATCC 12228 / FDA PCI 1200), this protein is Processive diacylglycerol beta-glucosyltransferase.